The following is a 603-amino-acid chain: Pyruvate decarboxylase 4 (603 aa).

The substrate site is built by Asp-65 and His-152. The thiamine pyrophosphate binding stretch occupies residues Asp-430–Ile-512. Residues Asp-480, Asn-507, and Gly-509 each contribute to the Mg(2+) site. Glu-513 is a substrate binding site.

This sequence belongs to the TPP enzyme family. In terms of assembly, homotetramer. Requires a metal cation as cofactor. It depends on thiamine diphosphate as a cofactor. In terms of tissue distribution, expressed in shoots and at lowe levels in roots, flowers and siliques.

It catalyses the reaction a 2-oxocarboxylate + H(+) = an aldehyde + CO2. The sequence is that of Pyruvate decarboxylase 4 (PDC4) from Arabidopsis thaliana (Mouse-ear cress).